Reading from the N-terminus, the 178-residue chain is Sec-independent protein translocase protein TatB (178 aa).

Residues 2 to 22 (LPEIGAAELLIIAAVALIVVG) form a helical membrane-spanning segment. Positions 104–178 (HSPTGYENTV…KARKTAGSAE (75 aa)) are disordered. Over residues 114 to 131 (EPPPPEPEPQPAAEPAPK) the composition is skewed to pro residues. Residues 141–154 (PKAAAAPKAAAKPK) are compositionally biased toward low complexity.

It belongs to the TatB family. The Tat system comprises two distinct complexes: a TatABC complex, containing multiple copies of TatA, TatB and TatC subunits, and a separate TatA complex, containing only TatA subunits. Substrates initially bind to the TatABC complex, which probably triggers association of the separate TatA complex to form the active translocon.

The protein localises to the cell inner membrane. Its function is as follows. Part of the twin-arginine translocation (Tat) system that transports large folded proteins containing a characteristic twin-arginine motif in their signal peptide across membranes. Together with TatC, TatB is part of a receptor directly interacting with Tat signal peptides. TatB may form an oligomeric binding site that transiently accommodates folded Tat precursor proteins before their translocation. This is Sec-independent protein translocase protein TatB from Phenylobacterium zucineum (strain HLK1).